A 367-amino-acid chain; its full sequence is DNA replication and repair protein RecF (367 aa).

30 to 37 (GDNAQGKT) provides a ligand contact to ATP.

It belongs to the RecF family.

The protein localises to the cytoplasm. The RecF protein is involved in DNA metabolism; it is required for DNA replication and normal SOS inducibility. RecF binds preferentially to single-stranded, linear DNA. It also seems to bind ATP. In Clostridium beijerinckii (strain ATCC 51743 / NCIMB 8052) (Clostridium acetobutylicum), this protein is DNA replication and repair protein RecF.